The sequence spans 474 residues: Dihydrolipoyl dehydrogenase (474 aa).

FAD-binding positions include 36-45 (ERYNTLGGVC), Lys-54, and Gly-117. Cys-45 and Cys-50 are oxidised to a cystine. NAD(+) is bound by residues 182-186 (GGGII) and Glu-205. Lys-220 is modified (N6-acetyllysine). Residues Val-238 and 270 to 273 (AIGR) each bind NAD(+). FAD contacts are provided by Asp-313 and Ala-321. His-445 acts as the Proton acceptor in catalysis.

Belongs to the class-I pyridine nucleotide-disulfide oxidoreductase family. As to quaternary structure, homodimer. It depends on FAD as a cofactor.

The protein localises to the cytoplasm. The catalysed reaction is N(6)-[(R)-dihydrolipoyl]-L-lysyl-[protein] + NAD(+) = N(6)-[(R)-lipoyl]-L-lysyl-[protein] + NADH + H(+). Lipoamide dehydrogenase is a component of the glycine cleavage system as well as of the alpha-ketoacid dehydrogenase complexes. This chain is Dihydrolipoyl dehydrogenase (lpdA), found in Shigella flexneri.